Reading from the N-terminus, the 255-residue chain is Imidazole glycerol phosphate synthase subunit HisF (255 aa).

Active-site residues include aspartate 11 and aspartate 130.

It belongs to the HisA/HisF family. Heterodimer of HisH and HisF.

Its subcellular location is the cytoplasm. It carries out the reaction 5-[(5-phospho-1-deoxy-D-ribulos-1-ylimino)methylamino]-1-(5-phospho-beta-D-ribosyl)imidazole-4-carboxamide + L-glutamine = D-erythro-1-(imidazol-4-yl)glycerol 3-phosphate + 5-amino-1-(5-phospho-beta-D-ribosyl)imidazole-4-carboxamide + L-glutamate + H(+). The protein operates within amino-acid biosynthesis; L-histidine biosynthesis; L-histidine from 5-phospho-alpha-D-ribose 1-diphosphate: step 5/9. Its function is as follows. IGPS catalyzes the conversion of PRFAR and glutamine to IGP, AICAR and glutamate. The HisF subunit catalyzes the cyclization activity that produces IGP and AICAR from PRFAR using the ammonia provided by the HisH subunit. The chain is Imidazole glycerol phosphate synthase subunit HisF from Syntrophotalea carbinolica (strain DSM 2380 / NBRC 103641 / GraBd1) (Pelobacter carbinolicus).